Reading from the N-terminus, the 194-residue chain is Calcium channel flower (194 aa).

At 1-34 (MSFAEKITGLLARPNQQDPIGPEQPWYLKYGSRL) the chain is on the cytoplasmic side. The helical transmembrane segment at 35-55 (LGIVAAFFAILFGLWNVFSII) threads the bilayer. Topologically, residues 56–65 (TLSVSCLVAG) are extracellular. A helical transmembrane segment spans residues 66–88 (ILQMVAGFVVMLLEAPCCFVCFG). The Cytoplasmic segment spans residues 89-106 (QVNEIAEKVESKPLYFRA). The helical transmembrane segment at 107–127 (GLYIAMAIPPIILCFGLASLF) threads the bilayer. The Extracellular portion of the chain corresponds to 128-194 (GSGLIFGTGV…TGAVGTDSNV (67 aa)). Important for promoting apoptosis stretches follow at residues 135 to 157 (TGVV…RAAA) and 135 to 192 (TGVV…GTDS).

It belongs to the calcium channel flower family. As to quaternary structure, associates with the dally/ magu complex. Homomultimer. Associates with the dally/ magu complex. Detected in the imaginal wing disk (at protein level). As to expression, detected throughout the adult brain, including the optic lobe but, at much lower levels of expression than isoform Lose-A. In terms of tissue distribution, detected in the optic lobe (at protein level). Detected throughout the adult brain, including the optic lobe. Expressed in damaged and undamaged optic lobe neurons. Expressed in optic lobe neurons, with higher levels of expression in suboptimal neurons. Specifically expressed in injury-damaged optic lobe neurons.

Its subcellular location is the cell membrane. It localises to the cytoplasmic vesicle. The protein localises to the secretory vesicle. It is found in the synaptic vesicle membrane. The protein resides in the presynaptic cell membrane. Its subcellular location is the endosome. It localises to the synaptic vesicle. Its activity is regulated as follows. Channel activity is inhibited by La(3+), which reduces Ca(2+) influx and thus inhibits it's function in promoting activity-dependent bulk endocytosis (ADBE) in response to high stimuli. Functionally, transmembrane protein which mediates synaptic endocytosis, fitness-based cell culling, neuronal culling, morphogen gradient scaling, and calcium transport. Regulates synaptic endocytosis and hence couples exo- with endocytosis. Controls two major modes of synaptic vesicle (SV) endocytosis in the synaptic boutons of neuromuscular junctions (NMJs); Ca(2+) channel-independent Clathrin-mediated endocytosis (CME) in response to mild stimulation, and Ca(2+) channel-dependent activity-dependent bulk endocytosis (ADBE) in response to strong stimulation. Functions in ADBE and subsequent SV reformation from bulk endosomes by initiating Ca(2+) channel-dependent phosphatidylinositol 4,5-bisphosphate (PtdIns(4,5)P2) compartmentalization in synaptic boutons. There it acts at the periactive zone to provide the low Ca(2+) levels required to initiate Calcineurin activation and upregulate PtdIns(4,5)P2. Conversely PtdIns(4,5)P2 enhances fwe Ca(2+) channel-activity, establishing a positive feedback loop that induces PtdIns(4,5)P2 microdomain at the periactive zone. These microdomains trigger bulk membrane invagination (i.e. ADBE) by triggering actin polymerization while also promoting localization of fwe to bulk endosomes, thereby removing the ADBE trigger to reduce endocytosis and prevent excess membrane uptake. PtdIns(4,5)P2 then promotes SV reformation from the bulk endosomes, to coordinate ADBE and subsequent SV reformation. Different combinations of the flower isoforms at the cell membrane are also required for the identification and elimination of suboptimal or supernumerary cells during development, regeneration, and adulthood. Required for the recognition and elimination of unfit cells in the developing wing during cell competition. Also required for efficient identification and elimination of injured, damaged and/or dysfunctional neurons during regeneration of the adult brain. In the developing pupal retina, mediates the elimination of unwanted postmitotic neurons, including supernumerary photoreceptor neurons that form at the periphery of the retina and are contained within incomplete ommatidia units. Downstream of the flower fitness fingerprints, cells identified as unwanted or unfit are eliminated via apoptosis through the expression of ahuizotl (azot). However, the cells marked for elimination by the flower isoforms only undergo apoptosis if additional thresholds are met; (1) their neighboring fit/healthy cells express different levels of the fwe isoforms, and (2) the levels of the protective signal SPARC expressed by the loser or unwanted cells are unable to inhibit caspase activation. These additional thresholds for flower-mediated apoptosis, allows useful cells to recover from transient and limited stress before they are unnecessarily eliminated. Functions with dally and magu in a mechanism of scaling, which utilises apoptosis to ensure that the dpp morphogen gradient, which mediates organ growth, remains proportional to the size of the growing wing. In this mechanism, fwe represses dally- and Magu-dependent activity in expanding the gradient, and dally/Magu inhibits fwe-dependent apoptosis to keep cell death rate low. When the levels of these different proteins are optimally regulated the gradient correctly scales with organ growth but when this fails, fwe-mediated apoptosis is activated to trim the developing tissue to match the correct size of the gradient. In terms of biological role, functions with the other flower isoforms to produce tissue-specific fitness fingerprints that identify unfit or fit cells during cell selection processes in order to maintain tissue health. In the wing imaginal disk, this isoform is highly expressed in healthy/normal cells but is down-regulated in cells with decreased fitness. During cell competition, if levels of this isoform in unfit cells is lower than in the surrounding neighboring cells, the suboptimal cells are recognized as 'loser' cells, and undergo elimination via apoptosis to be replaced by the surrounding healthy 'winner' cell population. Its function is as follows. Functions with the other flower isoforms to produce tissue-specific fitness fingerprints that identify unfit or fit cells during cell selection processes in order to maintain tissue health. In the wing imaginal disk, this isoform displays low levels of expression in healthy/normal cells but is up-regulated in cells with decreased fitness. During cell competition, if levels of this isoform in unfit cells is higher than in the surrounding neighboring cells, the suboptimal cells are recognized as 'loser' cells, and undergo elimination via apoptosis to be replaced by the surrounding healthy 'winner' cell population. Functions with the other flower isoforms to produce tissue-specific fitness fingerprints that identify unfit cells for cell selection processes during development, regeneration, and to maintain tissue health. During cell competition in certain tissues, marks suboptimal or damaged cells as 'loser' cells. In cells of the wing imaginal disk and damaged or dysfunctional neurons in the adult optic lobe, this isoform displays low to no expression in healthy/normal cells but is up-regulated in cells with decreased fitness or damage-affected neurons. During cell competition, if levels of this isoform in unfit cells is higher than in the surrounding neighboring cells, the suboptimal cells are recognized as 'loser' cells, and undergo elimination via apoptosis to be replaced by the surrounding healthy/undamaged 'winner' cell population. In the developing pupal retina, also required for the recognition and elimination of postmitotic neurons, including supernumerary photoreceptor neurons that form at the periphery of the retina and are contained within incomplete ommatidia units. Activity at the peripheral retina is induced by the wg signaling pathway but, once activated, it promotes apoptosis of supernumerary photoreceptor neurons independently of wg signaling and snail function. This is Calcium channel flower (fwe) from Drosophila melanogaster (Fruit fly).